The following is a 281-amino-acid chain: NADPH-dependent 7-cyano-7-deazaguanine reductase (281 aa).

Substrate is bound at residue 81–83 (VES). 83–84 (SK) contacts NADPH. Cys188 serves as the catalytic Thioimide intermediate. Asp195 (proton donor) is an active-site residue. Substrate is bound at residue 227-228 (HE). 256–257 (RG) contributes to the NADPH binding site. Residues 261–281 (INPLRTSHPQGLPRNMRTARQ) are disordered.

The protein belongs to the GTP cyclohydrolase I family. QueF type 2 subfamily. In terms of assembly, homodimer.

The protein resides in the cytoplasm. It catalyses the reaction 7-aminomethyl-7-carbaguanine + 2 NADP(+) = 7-cyano-7-deazaguanine + 2 NADPH + 3 H(+). The protein operates within tRNA modification; tRNA-queuosine biosynthesis. In terms of biological role, catalyzes the NADPH-dependent reduction of 7-cyano-7-deazaguanine (preQ0) to 7-aminomethyl-7-deazaguanine (preQ1). This chain is NADPH-dependent 7-cyano-7-deazaguanine reductase, found in Verminephrobacter eiseniae (strain EF01-2).